The following is a 169-amino-acid chain: Ribosome maturation factor RimM (169 aa).

The PRC barrel domain maps to glutamate 97–tyrosine 169.

It belongs to the RimM family. In terms of assembly, binds ribosomal protein uS19.

It localises to the cytoplasm. Functionally, an accessory protein needed during the final step in the assembly of 30S ribosomal subunit, possibly for assembly of the head region. Essential for efficient processing of 16S rRNA. May be needed both before and after RbfA during the maturation of 16S rRNA. It has affinity for free ribosomal 30S subunits but not for 70S ribosomes. This is Ribosome maturation factor RimM from Neisseria meningitidis serogroup B (strain ATCC BAA-335 / MC58).